Here is a 122-residue protein sequence, read N- to C-terminus: uncharacterized protein (122 aa).

This is an uncharacterized protein from Human adenovirus F serotype 41 (HAdV-41).